The chain runs to 64 residues: Outer envelope membrane protein 7 (64 aa).

The Chloroplast intermembrane segment spans residues M1–T11. The helical transmembrane segment at V12–L32 threads the bilayer. Residues K29–F35 carry the AKR2A-binding sequence (ABS) required for chloroplast outer envelope membrane targeting motif. At D33 to L64 the chain is on the cytoplasmic side. Positions I39 to P48 are enriched in basic and acidic residues. The disordered stretch occupies residues I39–L64. Low complexity predominate over residues T53–L64.

As to quaternary structure, interacts with AKR2A. In terms of tissue distribution, confined to green tissues.

Its subcellular location is the plastid. The protein resides in the chloroplast outer membrane. The sequence is that of Outer envelope membrane protein 7 from Arabidopsis thaliana (Mouse-ear cress).